A 274-amino-acid chain; its full sequence is Pyridoxal phosphate homeostasis protein (274 aa).

A Phosphoserine modification is found at serine 6. Lysine 47 carries the N6-(pyridoxal phosphate)lysine modification. Tyrosine 69 is subject to Phosphotyrosine. Residue lysine 125 is modified to N6-succinyllysine. Phosphoserine is present on residues serine 226 and serine 244.

It belongs to the pyridoxal phosphate-binding protein YggS/PROSC family.

In terms of biological role, pyridoxal 5'-phosphate (PLP)-binding protein, which may be involved in intracellular homeostatic regulation of pyridoxal 5'-phosphate (PLP), the active form of vitamin B6. This is Pyridoxal phosphate homeostasis protein from Mus musculus (Mouse).